Here is a 234-residue protein sequence, read N- to C-terminus: Sugar fermentation stimulation protein homolog (234 aa).

The protein belongs to the SfsA family.

The sequence is that of Sugar fermentation stimulation protein homolog from Shewanella baltica (strain OS195).